The primary structure comprises 291 residues: Exosome complex exonuclease RRP42 (291 aa).

Alanine 2 carries the N-acetylalanine modification. Residue lysine 116 is modified to N6-acetyllysine.

This sequence belongs to the RNase PH family. In terms of assembly, component of the RNA exosome core complex (Exo-9), composed of EXOSC1, EXOSC2, EXOSC3, EXOSC4, EXOSC5, EXOSC6, EXOSC7, EXOSC8 and EXOSC9; within the complex interacts with EXOSC2 and EXOSC4. The catalytically inactive RNA exosome core complex (Exo-9) associates with the catalytic subunit EXOSC10/RRP6. Exo-9 may associate with DIS3 to form the nucleolar exosome complex, or DIS3L to form the cytoplasmic exosome complex. Exo-9 is formed by a hexameric base ring consisting of the heterodimers EXOSC4-EXOSC9, EXOSC5-EXOSC8 and EXOSC6-EXOSC7, and a cap ring consisting of EXOSC1, EXOSC2 and EXOSC3. The RNA exosome complex associates with cofactors C1D/RRP47, MPHOSPH6/MPP6 and MTREX/MTR4. Interacts with ZC3HAV1. Interacts with DIS3; the interaction is direct.

The protein resides in the nucleus. It localises to the nucleolus. Its subcellular location is the cytoplasm. Functionally, non-catalytic component of the RNA exosome complex which has 3'-&gt;5' exoribonuclease activity and participates in a multitude of cellular RNA processing and degradation events. In the nucleus, the RNA exosome complex is involved in proper maturation of stable RNA species such as rRNA, snRNA and snoRNA, in the elimination of RNA processing by-products and non-coding 'pervasive' transcripts, such as antisense RNA species and promoter-upstream transcripts (PROMPTs), and of mRNAs with processing defects, thereby limiting or excluding their export to the cytoplasm. The RNA exosome may be involved in Ig class switch recombination (CSR) and/or Ig variable region somatic hypermutation (SHM) by targeting AICDA deamination activity to transcribed dsDNA substrates. In the cytoplasm, the RNA exosome complex is involved in general mRNA turnover and specifically degrades inherently unstable mRNAs containing AU-rich elements (AREs) within their 3' untranslated regions, and in RNA surveillance pathways, preventing translation of aberrant mRNAs. It seems to be involved in degradation of histone mRNA. The catalytic inactive RNA exosome core complex of 9 subunits (Exo-9) is proposed to play a pivotal role in the binding and presentation of RNA for ribonucleolysis, and to serve as a scaffold for the association with catalytic subunits and accessory proteins or complexes. The chain is Exosome complex exonuclease RRP42 (Exosc7) from Mus musculus (Mouse).